Here is a 142-residue protein sequence, read N- to C-terminus: Putative pre-16S rRNA nuclease (142 aa).

The protein belongs to the YqgF nuclease family.

It localises to the cytoplasm. Its function is as follows. Could be a nuclease involved in processing of the 5'-end of pre-16S rRNA. The polypeptide is Putative pre-16S rRNA nuclease (Saccharophagus degradans (strain 2-40 / ATCC 43961 / DSM 17024)).